Here is a 195-residue protein sequence, read N- to C-terminus: ATP-dependent Clp protease proteolytic subunit (195 aa).

Ser98 acts as the Nucleophile in catalysis. His123 is an active-site residue.

The protein belongs to the peptidase S14 family. Fourteen ClpP subunits assemble into 2 heptameric rings which stack back to back to give a disk-like structure with a central cavity, resembling the structure of eukaryotic proteasomes.

The protein resides in the cytoplasm. It carries out the reaction Hydrolysis of proteins to small peptides in the presence of ATP and magnesium. alpha-casein is the usual test substrate. In the absence of ATP, only oligopeptides shorter than five residues are hydrolyzed (such as succinyl-Leu-Tyr-|-NHMec, and Leu-Tyr-Leu-|-Tyr-Trp, in which cleavage of the -Tyr-|-Leu- and -Tyr-|-Trp bonds also occurs).. Its function is as follows. Cleaves peptides in various proteins in a process that requires ATP hydrolysis. Has a chymotrypsin-like activity. Plays a major role in the degradation of misfolded proteins. The chain is ATP-dependent Clp protease proteolytic subunit from Helicobacter pylori (strain G27).